Reading from the N-terminus, the 166-residue chain is UPF0179 protein Tneu_1978 (166 aa).

The tract at residues 140-166 is disordered; sequence PPSPSKSGGATASRDPSRAPPSRPLSK. The segment covering 157–166 has biased composition (pro residues); the sequence is RAPPSRPLSK.

This sequence belongs to the UPF0179 family.

The polypeptide is UPF0179 protein Tneu_1978 (Pyrobaculum neutrophilum (strain DSM 2338 / JCM 9278 / NBRC 100436 / V24Sta) (Thermoproteus neutrophilus)).